Consider the following 898-residue polypeptide: Alanine--tRNA ligase (898 aa).

The Zn(2+) site is built by H582, H586, C685, and H689.

Belongs to the class-II aminoacyl-tRNA synthetase family. Requires Zn(2+) as cofactor.

It localises to the cytoplasm. It catalyses the reaction tRNA(Ala) + L-alanine + ATP = L-alanyl-tRNA(Ala) + AMP + diphosphate. Catalyzes the attachment of alanine to tRNA(Ala) in a two-step reaction: alanine is first activated by ATP to form Ala-AMP and then transferred to the acceptor end of tRNA(Ala). Also edits incorrectly charged Ser-tRNA(Ala) and Gly-tRNA(Ala) via its editing domain. The protein is Alanine--tRNA ligase of Mycolicibacterium gilvum (strain PYR-GCK) (Mycobacterium gilvum (strain PYR-GCK)).